A 1093-amino-acid polypeptide reads, in one-letter code: MVVPGPLALSLLLSSLTLLVSHLSSSQDIASESSSEQQMCTRREHPIVAFEDLKPWVFNFTYPGVRDFSQLALDPSRNQLIVGARNYLFRLSLANVSLLQATEWASSEDTRRSCQSKGKTEEECQNYVRVLIVSGRKVFMCGTNAFSPVCSSRQVGNLSRTIEKINGVARCPYDPRHNSTAVISSQGELYAATVIDFSGRDPAIYRSLGSGPPLRTAQYNSKWLNEPNFVAAFDIGLFAYFFLRENAVEHDCGRTVYSRVARVCKNDVGGRFLLEDTWTTFMKARLNCSRPGEVPFYYNELQSAFHLPEQDLIYGVFTTNVNSIAASAVCAFNLSAISKAFNGPFRYQENPRAAWLPIANPIPNFQCGTLPETGPNENLTERSLQDAQRLFLMSEAVQPVTPEPCVTQDSVRFSHLVVDLVQAKDTLYHVLYIGTESGTILKALSTASRSLRGCYLEELHVLPPGRLEPLRSLRILHSARALFVGLSDRVLRVPLERCSAYHSQGACLGARDPYCGWDGKRQLCSTLEDSSNMSLWIQNITTCPVRNVTRDGGFGPWSPWKPCEHLDGDNSGSCLCRARSCDSPRPRCGGLECLGPSIHIANCSRNGAWTAWSSWAQCSTSCGIGFQVRQRSCSNPAPRHGGRICVGKSREERFCNENTPCPVPIFWASWGSWSKCSNNCGGGVQSRRRSCENGNSCPGCGVEFKTCNPEACPEVRRNTPWTPWLPVNVTQGGARQEQRFRFTCRAPLPDPHGLQFGKRRTETRTCPADGTGACDTDALVEDLLRSGSTSPHTLNGGWATWGPWSSCSRDCELGFRVRKRTCTNPEPRNGGLPCVGDAAEYQDCNPQACPVRGAWSCWTAWSQCSASCGGGHYQRTRSCTSPAPSPGEDICLGLHTEEALCSTQACPEGWSLWSEWGVCTEDGAQSRSRSCEELLPGPGACVGNSSQSRPCPYSEIPVILPASSVEETTSCGGFNLIHLIVTGVSCFLVSGLLTLAVYLSCQHCQRQSQESTLVHPATPNHLHYKGGGTPKNEKYTPMEFKTLNKNNLIPDDRANFYPLQQTNVYTTTYYPSPLNKPSFRPEASPGQRCFPNS.

An N-terminal signal peptide occupies residues 1–19 (MVVPGPLALSLLLSSLTLL). The Extracellular portion of the chain corresponds to 20-978 (VSHLSSSQDI…TSCGGFNLIH (959 aa)). A Sema domain is found at 45–495 (HPIVAFEDLK…LSDRVLRVPL (451 aa)). N-linked (GlcNAc...) asparagine glycans are attached at residues N59 and N95. 2 disulfide bridges follow: C114-C124 and C141-C150. N-linked (GlcNAc...) asparagine glycans are attached at residues N157, N178, and N287. 2 disulfide bridges follow: C264/C367 and C288/C330. N-linked (GlcNAc...) asparagine glycosylation is found at N333, N378, N532, N539, N547, and N602. 7 TSP type-1 domains span residues 551-605 (DGGF…NCSR), 606-662 (NGAW…TPCP), 664-713 (PIFW…EACP), 721-776 (WTPW…ACDT), 795-850 (NGGW…QACP), 852-907 (RGAW…QACP), and 908-952 (EGWS…RPCP). 6 cysteine pairs are disulfide-bonded: C618–C655, C622–C661, C633–C645, C676–C707, C680–C712, and C691–C697. N-linked (GlcNAc...) asparagine glycosylation is present at N728. Disulfide bonds link C807-C844, C811-C849, C822-C834, C864-C901, C868-C906, and C879-C891. N944 carries N-linked (GlcNAc...) asparagine glycosylation. The chain crosses the membrane as a helical span at residues 979–999 (LIVTGVSCFLVSGLLTLAVYL). At 1000 to 1093 (SCQHCQRQSQ…SPGQRCFPNS (94 aa)) the chain is on the cytoplasmic side.

Belongs to the semaphorin family. As to expression, in adult, only detected in brain.

The protein resides in the membrane. In terms of biological role, may act as a positive axonal guidance cue. This Mus musculus (Mouse) protein is Semaphorin-5B (Sema5b).